The sequence spans 328 residues: C-type lectin domain family 11 member A (328 aa).

The first 21 residues, 1-21, serve as a signal peptide directing secretion; the sequence is MQAAWLLGALLVPHLLSFGHG. The interval 58 to 111 is disordered; it reads PTGVGNKDNLAENSEGKEVWEATETQGEEEEEETTTTPSSSPTPFPSPSPTSED. The region spanning 188-325 is the C-type lectin domain; the sequence is LGHKCFLLSR…CERRLYFVCE (138 aa). 2 cysteine pairs are disulfide-bonded: cysteine 209-cysteine 324 and cysteine 301-cysteine 316.

In terms of processing, O-glycosylated. Probably sulfated on the O-glycans.

The protein resides in the cytoplasm. The protein localises to the secreted. Functionally, promotes osteogenesis by stimulating the differentiation of mesenchymal progenitors into mature osteoblasts. Important for repair and maintenance of adult bone. In Rattus norvegicus (Rat), this protein is C-type lectin domain family 11 member A (Clec11a).